Reading from the N-terminus, the 209-residue chain is Probable GTP-binding protein EngB (209 aa).

The EngB-type G domain maps to 23-198 (NGAEIAFAGR…EKVVAGWLVP (176 aa)). GTP is bound by residues 31–38 (GRSNAGKS), 58–62 (GRTQL), 76–79 (DLPG), 143–146 (TKSD), and 177–179 (FSS). Positions 38 and 60 each coordinate Mg(2+).

It belongs to the TRAFAC class TrmE-Era-EngA-EngB-Septin-like GTPase superfamily. EngB GTPase family. The cofactor is Mg(2+).

Functionally, necessary for normal cell division and for the maintenance of normal septation. This is Probable GTP-binding protein EngB from Azoarcus sp. (strain BH72).